Consider the following 271-residue polypeptide: Large ribosomal subunit protein uL2 (271 aa).

Residues R221–K271 are disordered. The span at T257–K271 shows a compositional bias: basic residues.

Belongs to the universal ribosomal protein uL2 family. In terms of assembly, part of the 50S ribosomal subunit. Forms a bridge to the 30S subunit in the 70S ribosome.

Functionally, one of the primary rRNA binding proteins. Required for association of the 30S and 50S subunits to form the 70S ribosome, for tRNA binding and peptide bond formation. It has been suggested to have peptidyltransferase activity; this is somewhat controversial. Makes several contacts with the 16S rRNA in the 70S ribosome. The polypeptide is Large ribosomal subunit protein uL2 (Karelsulcia muelleri (strain GWSS) (Sulcia muelleri)).